The following is a 630-amino-acid chain: MVNWQTLFMVSLRRQGSSSRYRYKFNMENITHQVFPRCKQAFKKANLSYEYCDLEGKLYNASLMDLQKMLLRDINAPRDHVFKIVRTDLVEKSSKKRIQHWEQIAPIFDHPLSLYENLLSEMDNDFKPSFEWQQLIEVRSRDDQLKLQRVVWPKSIFSNFCRGIGVKKNTYDRLLKQNNGEVPMFVNPANAKPLPLFQVGDDATIGEFDGIGIFPYFVVKHRAFFVTEVDKLKTKIISPLCNLNERKRTDKANAGRLLENEKGEPFYVDAKGAASRAADGNAVTLKQLLERSVSHKTLWSKQTNKDRTCPGDILRATILSNDFSIRQLRTEFCKNFILYNIFTILQRNKKSIRDFSNDNNVPSFRFNWNVWDSYIWKQYQEAESMTLPADQASLINYKTKYDSFLQDLQTYSTLVISEMKWNQFSIFQNNETSLSRFEHITLILQTILTKSKMIRIFQPNLYKFMQDDLRATLMELTGFTESINATIGPGFANEQSLQSANALKKLANQLLHFEQKIYAEKFRVNRPIQLRPLTLSTNFKIVILDKQNAIPEIFQTLLKFTTQITTYFVKDLSEVELHGHMHCIDKKMLDKSTFMYLYELKYNEDLKAVPPQKEKIVDNIIGLLSNDEEH.

The protein localises to the mitochondrion. In terms of biological role, appears to be specifically required for the splicing of the terminal intron (bI5) of the cytochrome b pre-mRNA. Can also stimulates the splicing of the omega intron of the precursor of large ribosomal RNA. The protein is Cytochrome B pre-mRNA-processing protein 2 (CBP2) of Saccharomyces paradoxus (Yeast).